Consider the following 1115-residue polypeptide: PAN2-PAN3 deadenylation complex catalytic subunit PAN2 (1115 aa).

WD repeat units follow at residues 27-66 (NRDKEITAISFDEKANLIWSGDSYGCISSYDPTFQLYTRY), 112-153 (AAFS…GCLD), 155-194 (LLNYSSKVKLMCSNNKVLSIGRQTGTVDLLDPTSNRTIKS), 197-236 (AHSASISAMDLRDNTLVTVGKSKRFYNLYADPFVNVYDLR), and 295-334 (HPCQSIKKLCLSPNGDVLGILEADNHLDTWRRSSNNMGMF). Residues 337–473 (TPEMLAYPDY…IQTYTSINKY (137 aa)) form a linker region. The region spanning 474–855 (EVPPAYSRLP…TPEIIIYCDA (382 aa)) is the USP domain. Residues Cys-660, His-662, Cys-713, and Cys-716 each coordinate Zn(2+). The Exonuclease domain occupies 907–1079 (VAIDAEFVSL…EDAHTALILY (173 aa)). Positions 910, 912, 1020, and 1071 each coordinate a divalent metal cation.

Belongs to the peptidase C19 family. PAN2 subfamily. Forms a heterotrimer with an asymmetric homodimer of the regulatory subunit PAN3 to form the poly(A)-nuclease (PAN) deadenylation complex. It depends on a divalent metal cation as a cofactor.

The protein localises to the cytoplasm. The enzyme catalyses Exonucleolytic cleavage of poly(A) to 5'-AMP.. With respect to regulation, positively regulated by the regulatory subunit PAN3. Negatively regulated by PAB1-binding protein PBP1. Inhibited under stress conditions. Inhibition of deadenylation under stress increases mRNA stability, which may be a mechanism to retain the majority of the cytoplasmic pool of mRNAs for later reuse and recovery from stress. Its function is as follows. Catalytic subunit of the poly(A)-nuclease (PAN) deadenylation complex, one of two cytoplasmic mRNA deadenylases involved in mRNA turnover. PAN specifically shortens poly(A) tails of RNA and the activity is stimulated by poly(A)-binding protein PAB1. PAN deadenylation is followed by rapid degradation of the shortened mRNA tails by the CCR4-NOT complex. Deadenylated mRNAs are then degraded by two alternative mechanisms, namely exosome-mediated 3'-5' exonucleolytic degradation, or deadenylation-dependent mRNA decaping by DCP1-DCP2 and subsequent 5'-3' exonucleolytic degradation by XRN1. May also be involved in post-transcriptional maturation of mRNA poly(A) tails, trimming the tails from their synthesized length to the slightly shorter, apparently messenger-specific length found on newly exported mRNAs. PAN cooperates with protein kinase DUN1 in the regulation of RAD5 mRNA levels and cell survival in response to replicational stress. This is PAN2-PAN3 deadenylation complex catalytic subunit PAN2 from Saccharomyces cerevisiae (strain ATCC 204508 / S288c) (Baker's yeast).